A 398-amino-acid chain; its full sequence is Streptopain (398 aa).

A signal peptide spans 1 to 27 (MNKKKLGVRLLSLLALGGFVLANPVFA). A propeptide spanning residues 28–145 (DQNFARNEKE…TTYAGTAEIK (118 aa)) is cleaved from the precursor. Catalysis depends on C192, which acts as the Nucleophile. C192 bears the Cysteine methyl disulfide; in zymogen form mark. A protein is bound by residues S282 and G339. Catalysis depends on H340, which acts as the Proton acceptor. Residues 368–390 (RLDALNPSALGTGGGAGGFNGYQ) form a C-terminal active site loop region.

It belongs to the peptidase C10 family. As to quaternary structure, monomer. Post-translationally, the mature protease is derived from the precursor sequence by cleavage, either in cis via an autocatalytic mechanism, or in trans by mature SpeB or host proteases (trypsin, plasmin or subtilisin). Maturation can involve a number of protein cleavage intermediates. Mature SpeB probably plays the most important role in protein maturation in physiological conditions. Methylthiolation at Cys-192 of the inactive zymogen form is probably involved in the mechanism of secretion of the proteinase into the culture fluid.

Its subcellular location is the secreted. The protein resides in the host extracellular space. It is found in the host cytoplasm. It catalyses the reaction Preferential cleavage with hydrophobic residues at P2, P1 and P1'.. Synthesized as an inactive zymogen to protect the intracellular components of the bacteria from proteolytic activity during protein production. Once secreted into the extracellular milieu, cleaved into the active protease: maturation can be mediated in cis by autocatalytic cleavage, or in trans by mature SpeB or host proteases. Protease activity is strongly inhibited by zinc and copper, which prevent its maturation into an active protease: inhibition by metal ions may be required to prevent proteolysis of streptococcal proteins. In terms of biological role, cysteine protease that acts as a key streptococcal virulence factor by cleaving host proteins involved in immune response. Triggers inflammation by mediating cleavage of host proteins, which can both promote host pathogenesis by triggering sterile inflammation and/or restrict streptococcal infection, depending on host immune statue and infection site. Cleaves host gasdermin-A (GSDMA) in epithelial cells, promoting GSDMA activation and formation of gasdermin pores, triggering pyroptosis. Pyroptosis triggers the elimination of the infected skin cell, depriving the pathogen of its protective niche, while inducing an inflammatory response. This ultimately prevents bacterial penetration of the epithelial barrier and a subsequent systemic dissemination of the pathogen. Also mediates cleavage of the cytokine precursor interleukin-1 beta (IL1B) to its mature form, resulting in inflammation and septic shock. SpeB-mediated maturation of IL1B plays a dual role depending on infection site: while IL1B inflammatory response prevents bacterial growth during invasive skin infections, it promotes streptococcal infection of the nasopharynx by disrupting colonization resistance mediated by the microbiota. Inhibits host autophagy be catalyzing cleavage and inactivation of key autophagy factors, such as CALCOCO2, NBR1 and SQSTM1. Cleaves and inhibits a number of complement factors, such as C2, C3-beta chain of C3, C4, C5 or SERPING1, thereby promoting evasion of host immunity. May also impair adaptive immunity by catalyzing cleavage and degradation of host immunoglobulins to promote immune system evasion; the relevance of this activity is however unsure in vivo. Catalyzes maturation and release of the peptide hormone bradykinin from the precursor Kininogen-1 (KNG1) to produce hypotension during septic shock. Also involved in bacterial translocation across the host epithelial barrier by mediating cleavage and degradation of host epithelial junction proteins, such as CDH1 and OCLN. Additionally, has been involved in degradation of fibronectin and vitronectin, two host extracellular matrix proteins involved in tissue integrity. Also able to catalyze cleavage and degradation of streptococcal proteins, such as C5a peptidase, EndoS or SmeZ. Degradation of streptococcal proteins is however strictly regulated to preserve integrity of other virulence factors. The chain is Streptopain from Streptococcus pyogenes serotype M1.